The chain runs to 904 residues: Phosphoenolpyruvate carboxylase (904 aa).

Residues 52-71 form a disordered region; the sequence is ISRRESDAPPSTLSEQLTGR. Catalysis depends on residues histidine 151 and lysine 570.

This sequence belongs to the PEPCase type 1 family. The cofactor is Mg(2+).

It catalyses the reaction oxaloacetate + phosphate = phosphoenolpyruvate + hydrogencarbonate. Its function is as follows. Forms oxaloacetate, a four-carbon dicarboxylic acid source for the tricarboxylic acid cycle. This Xanthomonas oryzae pv. oryzae (strain MAFF 311018) protein is Phosphoenolpyruvate carboxylase.